We begin with the raw amino-acid sequence, 296 residues long: tRNA dimethylallyltransferase (296 aa).

Glycine 2–threonine 9 is an ATP binding site. Substrate is bound at residue threonine 4 to threonine 9. Interaction with substrate tRNA regions lie at residues aspartate 27–leucine 30, glutamine 151–arginine 155, and arginine 232–arginine 237.

Belongs to the IPP transferase family. Monomer. Mg(2+) is required as a cofactor.

It carries out the reaction adenosine(37) in tRNA + dimethylallyl diphosphate = N(6)-dimethylallyladenosine(37) in tRNA + diphosphate. Functionally, catalyzes the transfer of a dimethylallyl group onto the adenine at position 37 in tRNAs that read codons beginning with uridine, leading to the formation of N6-(dimethylallyl)adenosine (i(6)A). This Shewanella frigidimarina (strain NCIMB 400) protein is tRNA dimethylallyltransferase.